Consider the following 98-residue polypeptide: Flagellar hook-basal body complex protein FliE (98 aa).

Positions 22–56 (KTDNATGAGNTFTQMLDSMSDTQSNAQTSVSNLLT) are disordered. Over residues 23-56 (TDNATGAGNTFTQMLDSMSDTQSNAQTSVSNLLT) the composition is skewed to polar residues.

This sequence belongs to the FliE family.

The protein resides in the bacterial flagellum basal body. The sequence is that of Flagellar hook-basal body complex protein FliE from Listeria innocua serovar 6a (strain ATCC BAA-680 / CLIP 11262).